A 341-amino-acid chain; its full sequence is Methionine import ATP-binding protein MetN 1 (341 aa).

An ABC transporter domain is found at I2–V241. G38–S45 is an ATP binding site.

It belongs to the ABC transporter superfamily. Methionine importer (TC 3.A.1.24) family. As to quaternary structure, the complex is composed of two ATP-binding proteins (MetN), two transmembrane proteins (MetI) and a solute-binding protein (MetQ).

Its subcellular location is the cell membrane. It catalyses the reaction L-methionine(out) + ATP + H2O = L-methionine(in) + ADP + phosphate + H(+). It carries out the reaction D-methionine(out) + ATP + H2O = D-methionine(in) + ADP + phosphate + H(+). Functionally, part of the ABC transporter complex MetNIQ involved in methionine import. Responsible for energy coupling to the transport system. This is Methionine import ATP-binding protein MetN 1 from Staphylococcus aureus (strain USA300).